A 311-amino-acid chain; its full sequence is Peptide methionine sulfoxide reductase MsrA/MsrB 2 (311 aa).

The peptide methionine sulfoxide reductase A stretch occupies residues 1 to 155 (MHEIYLAGGC…PNGYCHINVN (155 aa)). Cysteine 10 is an active-site residue. The region spanning 172-295 (DEELKKTLSP…NSLSIRFIPK (124 aa)) is the MsrB domain. Catalysis depends on cysteine 284, which acts as the Nucleophile.

It in the N-terminal section; belongs to the MsrA Met sulfoxide reductase family. This sequence in the C-terminal section; belongs to the MsrB Met sulfoxide reductase family.

It catalyses the reaction L-methionyl-[protein] + [thioredoxin]-disulfide + H2O = L-methionyl-(S)-S-oxide-[protein] + [thioredoxin]-dithiol. The catalysed reaction is [thioredoxin]-disulfide + L-methionine + H2O = L-methionine (S)-S-oxide + [thioredoxin]-dithiol. It carries out the reaction L-methionyl-[protein] + [thioredoxin]-disulfide + H2O = L-methionyl-(R)-S-oxide-[protein] + [thioredoxin]-dithiol. Its function is as follows. Has an important function as a repair enzyme for proteins that have been inactivated by oxidation. Catalyzes the reversible oxidation-reduction of methionine sulfoxide in proteins to methionine. The sequence is that of Peptide methionine sulfoxide reductase MsrA/MsrB 2 (msrAB2) from Streptococcus pneumoniae serotype 4 (strain ATCC BAA-334 / TIGR4).